The following is a 367-amino-acid chain: NAD(P)H-quinone oxidoreductase subunit 1, chloroplastic (367 aa).

Helical transmembrane passes span 30–50 (LFPILTLVLGITIGVLVIVWL), 98–118 (FSIGPSIAVISIFLSYSVIPF), 127–147 (LSIGVFFWIAISSIAPVGLLM), 164–184 (AAAQSISYEIPLALCVLSISL), 273–293 (LFVTVLYLGGWNLSIPYIFVP), 304–324 (VFGTLIGIFITLAKTYLFLFI), and 340–360 (LLNLGWKFLLPISLGNLLLTT).

The protein belongs to the complex I subunit 1 family. As to quaternary structure, NDH is composed of at least 16 different subunits, 5 of which are encoded in the nucleus.

It is found in the plastid. It localises to the chloroplast thylakoid membrane. The catalysed reaction is a plastoquinone + NADH + (n+1) H(+)(in) = a plastoquinol + NAD(+) + n H(+)(out). It catalyses the reaction a plastoquinone + NADPH + (n+1) H(+)(in) = a plastoquinol + NADP(+) + n H(+)(out). In terms of biological role, NDH shuttles electrons from NAD(P)H:plastoquinone, via FMN and iron-sulfur (Fe-S) centers, to quinones in the photosynthetic chain and possibly in a chloroplast respiratory chain. The immediate electron acceptor for the enzyme in this species is believed to be plastoquinone. Couples the redox reaction to proton translocation, and thus conserves the redox energy in a proton gradient. The polypeptide is NAD(P)H-quinone oxidoreductase subunit 1, chloroplastic (Nicotiana tabacum (Common tobacco)).